The sequence spans 271 residues: 5-deoxy-glucuronate isomerase (271 aa).

This sequence belongs to the isomerase IolB family.

It carries out the reaction 5-deoxy-D-glucuronate = 5-dehydro-2-deoxy-D-gluconate. It participates in polyol metabolism; myo-inositol degradation into acetyl-CoA; acetyl-CoA from myo-inositol: step 4/7. Involved in the isomerization of 5-deoxy-glucuronate (5DG) to 5-dehydro-2-deoxy-D-gluconate (DKG or 2-deoxy-5-keto-D-gluconate). The sequence is that of 5-deoxy-glucuronate isomerase from Bacillus licheniformis (strain ATCC 14580 / DSM 13 / JCM 2505 / CCUG 7422 / NBRC 12200 / NCIMB 9375 / NCTC 10341 / NRRL NRS-1264 / Gibson 46).